We begin with the raw amino-acid sequence, 314 residues long: Replication initiation protein (314 aa).

Positions 1–18 are enriched in basic and acidic residues; sequence MSKKAEEIQAKQSLEKEN. The tract at residues 1–25 is disordered; that stretch reads MSKKAEEIQAKQSLEKENSNFSKTG.

Belongs to the plasmid replication initiation factor family.

This protein is probably a specific topoisomerase involved in initiating replication. This protein is specifically required and may be rate-limiting for replication of the plasmid in vivo. This Staphylococcus aureus protein is Replication initiation protein (repE).